Consider the following 336-residue polypeptide: Formimidoylglutamase (336 aa).

Residues histidine 129, aspartate 160, histidine 162, aspartate 164, aspartate 257, and aspartate 259 each coordinate Mn(2+).

This sequence belongs to the arginase family. Mn(2+) serves as cofactor.

It carries out the reaction N-formimidoyl-L-glutamate + H2O = formamide + L-glutamate. Its pathway is amino-acid degradation; L-histidine degradation into L-glutamate; L-glutamate from N-formimidoyl-L-glutamate (hydrolase route): step 1/1. Catalyzes the conversion of N-formimidoyl-L-glutamate to L-glutamate and formamide. The polypeptide is Formimidoylglutamase (Vibrio vulnificus (strain YJ016)).